A 249-amino-acid polypeptide reads, in one-letter code: Probable transglycosylase SceD 2 (249 aa).

Positions 1–27 are cleaved as a signal peptide; that stretch reads MKKTVIASTLAVGLGVTGIAAGNSADA. 2 stretches are compositionally biased toward low complexity: residues 80-95 and 103-171; these read WSYG…ASSE and QQTA…SSSS. The disordered stretch occupies residues 80-203; sequence WSYGEGSGEG…PSSGASGKFQ (124 aa). Polar residues-rich tracts occupy residues 172-182 and 192-203; these read GVNAHLQQIAQ and TNPSSGASGKFQ.

Belongs to the transglycosylase family. SceD subfamily.

It is found in the secreted. Its function is as follows. Is able to cleave peptidoglycan and affects clumping and separation of bacterial cells. This is Probable transglycosylase SceD 2 (sceD2) from Staphylococcus saprophyticus subsp. saprophyticus (strain ATCC 15305 / DSM 20229 / NCIMB 8711 / NCTC 7292 / S-41).